We begin with the raw amino-acid sequence, 319 residues long: Formimidoylglutamase (319 aa).

Residues His127, Asp150, His152, Asp154, Asp242, and Asp244 each contribute to the Mn(2+) site.

This sequence belongs to the arginase family. It depends on Mn(2+) as a cofactor.

It carries out the reaction N-formimidoyl-L-glutamate + H2O = formamide + L-glutamate. It participates in amino-acid degradation; L-histidine degradation into L-glutamate; L-glutamate from N-formimidoyl-L-glutamate (hydrolase route): step 1/1. In terms of biological role, catalyzes the conversion of N-formimidoyl-L-glutamate to L-glutamate and formamide. In Halalkalibacterium halodurans (strain ATCC BAA-125 / DSM 18197 / FERM 7344 / JCM 9153 / C-125) (Bacillus halodurans), this protein is Formimidoylglutamase.